A 502-amino-acid polypeptide reads, in one-letter code: Betaine aldehyde dehydrogenase, chloroplastic (502 aa).

The transit peptide at 1-7 directs the protein to the chloroplast; sequence MAFPIPA. 240–245 is an NAD(+) binding site; the sequence is GSSATG. The active-site Proton acceptor is the E262. Catalysis depends on C296, which acts as the Nucleophile.

The protein belongs to the aldehyde dehydrogenase family. As to quaternary structure, homodimer.

It localises to the plastid. The protein resides in the chloroplast. It carries out the reaction betaine aldehyde + NAD(+) + H2O = glycine betaine + NADH + 2 H(+). It participates in amine and polyamine biosynthesis; betaine biosynthesis via choline pathway; betaine from betaine aldehyde: step 1/1. In Atriplex hortensis (Mountain spinach), this protein is Betaine aldehyde dehydrogenase, chloroplastic.